A 487-amino-acid polypeptide reads, in one-letter code: Bifunctional protein HldE (487 aa).

Positions Met1–Gly326 are ribokinase. Asn205–Glu208 is a binding site for ATP. The active site involves Asp275. The tract at residues Phe356–Tyr487 is cytidylyltransferase.

The protein in the N-terminal section; belongs to the carbohydrate kinase PfkB family. This sequence in the C-terminal section; belongs to the cytidylyltransferase family. Homodimer.

The enzyme catalyses D-glycero-beta-D-manno-heptose 7-phosphate + ATP = D-glycero-beta-D-manno-heptose 1,7-bisphosphate + ADP + H(+). It catalyses the reaction D-glycero-beta-D-manno-heptose 1-phosphate + ATP + H(+) = ADP-D-glycero-beta-D-manno-heptose + diphosphate. The protein operates within nucleotide-sugar biosynthesis; ADP-L-glycero-beta-D-manno-heptose biosynthesis; ADP-L-glycero-beta-D-manno-heptose from D-glycero-beta-D-manno-heptose 7-phosphate: step 1/4. Its pathway is nucleotide-sugar biosynthesis; ADP-L-glycero-beta-D-manno-heptose biosynthesis; ADP-L-glycero-beta-D-manno-heptose from D-glycero-beta-D-manno-heptose 7-phosphate: step 3/4. Functionally, catalyzes the phosphorylation of D-glycero-D-manno-heptose 7-phosphate at the C-1 position to selectively form D-glycero-beta-D-manno-heptose-1,7-bisphosphate. Catalyzes the ADP transfer from ATP to D-glycero-beta-D-manno-heptose 1-phosphate, yielding ADP-D-glycero-beta-D-manno-heptose. This is Bifunctional protein HldE from Citrifermentans bemidjiense (strain ATCC BAA-1014 / DSM 16622 / JCM 12645 / Bem) (Geobacter bemidjiensis).